A 345-amino-acid chain; its full sequence is N-acetyl-gamma-glutamyl-phosphate reductase (345 aa).

Residue Cys-142 is part of the active site.

This sequence belongs to the NAGSA dehydrogenase family. Type 1 subfamily.

Its subcellular location is the cytoplasm. It catalyses the reaction N-acetyl-L-glutamate 5-semialdehyde + phosphate + NADP(+) = N-acetyl-L-glutamyl 5-phosphate + NADPH + H(+). The protein operates within amino-acid biosynthesis; L-arginine biosynthesis; N(2)-acetyl-L-ornithine from L-glutamate: step 3/4. Catalyzes the NADPH-dependent reduction of N-acetyl-5-glutamyl phosphate to yield N-acetyl-L-glutamate 5-semialdehyde. The polypeptide is N-acetyl-gamma-glutamyl-phosphate reductase (Thermus thermophilus (strain ATCC BAA-163 / DSM 7039 / HB27)).